A 136-amino-acid polypeptide reads, in one-letter code: Translation initiation factor 5A (136 aa).

Position 38 is a hypusine (Lys-38).

This sequence belongs to the eIF-5A family.

Its subcellular location is the cytoplasm. Functionally, functions by promoting the formation of the first peptide bond. In Methanopyrus kandleri (strain AV19 / DSM 6324 / JCM 9639 / NBRC 100938), this protein is Translation initiation factor 5A.